We begin with the raw amino-acid sequence, 64 residues long: Large ribosomal subunit protein bL35 (64 aa).

Belongs to the bacterial ribosomal protein bL35 family.

The sequence is that of Large ribosomal subunit protein bL35 from Leifsonia xyli subsp. xyli (strain CTCB07).